The primary structure comprises 1340 residues: Lysine-specific demethylase ELF6 (1340 aa).

The JmjN domain maps to 16-57 (APVFRPTDTEFADPIAYISKIEKEASAFGICKIIPPLPKPSK). The disordered stretch occupies residues 195 to 245 (QRKRRGRGFYQRKTENNDPSGKNGEKSSPEVEKAPLASTSLSSQDSSKQKN). Basic and acidic residues predominate over residues 217–227 (NGEKSSPEVEK). A JmjC domain is found at 262-428 (NSSWNLQMIA…VAKEAAVRRA (167 aa)). Fe cation contacts are provided by His-305, Glu-307, and His-396. The Nuclear localization signal 1 motif lies at 818–825 (GKKEEKII). Residues 1092–1225 (GEPLESSDIL…SRQQEVPTTT (134 aa)) are disordered. Over residues 1099-1115 (DILSSSNGDEASSNGLQ) the composition is skewed to polar residues. Residues 1124–1133 (ESEVSSSENT) are compositionally biased toward low complexity. Residues 1188 to 1201 (SLKHTETSDEEKKP) show a composition bias toward basic and acidic residues. Residues 1215 to 1225 (GSRQQEVPTTT) are compositionally biased toward polar residues. 4 C2H2-type zinc fingers span residues 1228–1250 (NRCYLEGCKMTFESKAKLQTHKR), 1251–1275 (NRCTHEGCGKKFRAHKYLVLHQRVH), 1281–1305 (FECSWKGCSMTFKWQWARTEHLRLH), and 1311–1337 (YICKVDGCGLSFRFVSDYSRHRRKTMH). Cys-1230, Cys-1235, His-1248, Cys-1253, Cys-1258, His-1265, His-1271, His-1275, Cys-1283, Cys-1288, His-1301, His-1305, Cys-1313, Cys-1318, His-1331, and His-1337 together coordinate Zn(2+). The Nuclear localization signal 2 motif lies at 1248-1255 (HKRNRCTH). Positions 1260–1333 (KKFRAHKYLV…FVSDYSRHRR (74 aa)) are DNA-binding.

This sequence belongs to the JHDM3 histone demethylase family. In terms of assembly, interacts with BZR2 (via N-terminus). In terms of tissue distribution, expressed at low levels in seedlings, cotyledons and leaves. Detected in inflorescences, stems, roots and siliques but not in shoot apical meristems or root tips. Accumulates in flowers and embryos.

The protein localises to the nucleus. The enzyme catalyses N(6),N(6),N(6)-trimethyl-L-lysyl(27)-[histone H3] + 2-oxoglutarate + O2 = N(6),N(6)-dimethyl-L-lysyl(27)-[histone H3] + formaldehyde + succinate + CO2. It catalyses the reaction N(6),N(6)-dimethyl-L-lysyl(27)-[histone H3] + 2-oxoglutarate + O2 = N(6)-methyl-L-lysyl(27)-[histone H3] + formaldehyde + succinate + CO2. In terms of biological role, histone demethylase that demethylates 'Lys-27' (H3K27me) of histone H3, thus acting as a positive regulator of gene expression. Demethylates tri-methylated (H3K27me3) and di-methylated (H3K27me2) H3K27me. Inactive on H3K27me1, H3K4me3, H3K9me2 and H3K36me3. Acts as a repressor of the photoperiodic flowering pathway and of FT. May also be active on H3K4me. Binds around the transcription start site of the FT locus. Required for epigenetic reprogramming by resetting the expression of the floral repressor FLC locus, thus aluviating cold-mediated FLC epigenetically silencing occurring during vernalization and preventing inapropriate epigenetic states inheritence. Its function is as follows. Together with REF6, required for H3K27me3 resetting (especially in constitutive heterochromatin within the pericentromeric regions) and transgenerational inheritance of histone marks, thus acting in safeguarding genome and epigenome integrity during sexual reproduction. The protein is Lysine-specific demethylase ELF6 of Arabidopsis thaliana (Mouse-ear cress).